Reading from the N-terminus, the 912-residue chain is Nonsense-mediated mRNA decay factor SMG8 (912 aa).

The segment at 565–630 (EHSNRTPDAS…GEDEDETLEQ (66 aa)) is disordered. A compositionally biased stretch (polar residues) spans 570-602 (TPDASTHPPMTNENSPHLSGSQKSQDSASNLTF). Residues 604–614 (MDEKRDEENKS) show a composition bias toward basic and acidic residues.

This sequence belongs to the SMG8 family.

Involved in nonsense-mediated decay (NMD) of mRNAs containing premature stop codons. Probable component of kinase complex containing SMG1 and recruited to stalled ribosomes. In Culex quinquefasciatus (Southern house mosquito), this protein is Nonsense-mediated mRNA decay factor SMG8.